The following is a 216-amino-acid chain: MRFFIDTANIEEIKEANDLGVICGVTTNPSLIAKEGRDFIEVVKEISEIVDGPISAEVISLEHKGMIEEAEKLSKIHKNIVIKIPMTAEGLKAVKVLSSKGIKTNVTLIFSAGQALLAARAGATYVSPFVGRLDDISQNGLDLIEEIVDIFSVNSIEAQIIVASVRNPIHVLQAARMGADIATVPLKVINQMIKHPLTDKGIDSFMKDWEGASLKL.

The active-site Schiff-base intermediate with substrate is Lys83.

The protein belongs to the transaldolase family. Type 3B subfamily.

It is found in the cytoplasm. It carries out the reaction D-sedoheptulose 7-phosphate + D-glyceraldehyde 3-phosphate = D-erythrose 4-phosphate + beta-D-fructose 6-phosphate. The protein operates within carbohydrate degradation; pentose phosphate pathway; D-glyceraldehyde 3-phosphate and beta-D-fructose 6-phosphate from D-ribose 5-phosphate and D-xylulose 5-phosphate (non-oxidative stage): step 2/3. In terms of biological role, transaldolase is important for the balance of metabolites in the pentose-phosphate pathway. This chain is Probable transaldolase, found in Clostridioides difficile (strain 630) (Peptoclostridium difficile).